The chain runs to 290 residues: 33 kDa chaperonin (290 aa).

Cystine bridges form between Cys235-Cys237 and Cys268-Cys271.

This sequence belongs to the HSP33 family. In terms of processing, under oxidizing conditions two disulfide bonds are formed involving the reactive cysteines. Under reducing conditions zinc is bound to the reactive cysteines and the protein is inactive.

It is found in the cytoplasm. Redox regulated molecular chaperone. Protects both thermally unfolding and oxidatively damaged proteins from irreversible aggregation. Plays an important role in the bacterial defense system toward oxidative stress. The polypeptide is 33 kDa chaperonin (Streptococcus pyogenes serotype M49).